Consider the following 336-residue polypeptide: Glyceraldehyde-3-phosphate dehydrogenase (336 aa).

Residues 12–13, Asp34, and Met79 each bind NAD(+); that span reads RI. Residues 150 to 152, Thr181, 210 to 211, and Arg233 each bind D-glyceraldehyde 3-phosphate; these read SCT and TG. Catalysis depends on Cys151, which acts as the Nucleophile. Asn316 contacts NAD(+).

The protein belongs to the glyceraldehyde-3-phosphate dehydrogenase family. As to quaternary structure, homotetramer.

The protein localises to the cytoplasm. It catalyses the reaction D-glyceraldehyde 3-phosphate + phosphate + NAD(+) = (2R)-3-phospho-glyceroyl phosphate + NADH + H(+). It functions in the pathway carbohydrate degradation; glycolysis; pyruvate from D-glyceraldehyde 3-phosphate: step 1/5. This is Glyceraldehyde-3-phosphate dehydrogenase from Echinococcus multilocularis (Fox tapeworm).